The chain runs to 257 residues: uncharacterized protein (257 aa).

The chain crosses the membrane as a helical span at residues 7–27 (LMLGICLVLLIILIVGYVIMT).

It belongs to the staphylococcal tandem lipoprotein family.

It is found in the cell membrane. This is an uncharacterized protein from Staphylococcus aureus (strain Mu50 / ATCC 700699).